Reading from the N-terminus, the 334-residue chain is Ferredoxin--NADP reductase (334 aa).

The FAD site is built by aspartate 32, glutamine 40, tyrosine 45, valine 85, phenylalanine 120, aspartate 287, and threonine 327.

Belongs to the ferredoxin--NADP reductase type 2 family. As to quaternary structure, homodimer. It depends on FAD as a cofactor.

It catalyses the reaction 2 reduced [2Fe-2S]-[ferredoxin] + NADP(+) + H(+) = 2 oxidized [2Fe-2S]-[ferredoxin] + NADPH. The sequence is that of Ferredoxin--NADP reductase from Wolbachia pipientis subsp. Culex pipiens (strain wPip).